The chain runs to 530 residues: Membrane-bound lytic murein transglycosylase F (530 aa).

The N-terminal stretch at 1–27 is a signal peptide; the sequence is MTPFAYKLPIRALWLGLLSLLLVGCQI. The tract at residues 28 to 279 is non-LT domain; the sequence is DSEPKSELEK…SLEEKYIGHI (252 aa). Positions 280 to 530 are LT domain; sequence GAFDYVDTRA…SAKPSTESKN (251 aa). The active site involves Glu-324. Residues 505–530 are disordered; sequence ALESESLENSESSAEPSAKPSTESKN. Positions 513–530 are enriched in low complexity; the sequence is NSESSAEPSAKPSTESKN.

It in the N-terminal section; belongs to the bacterial solute-binding protein 3 family. This sequence in the C-terminal section; belongs to the transglycosylase Slt family.

It is found in the cell outer membrane. The enzyme catalyses Exolytic cleavage of the (1-&gt;4)-beta-glycosidic linkage between N-acetylmuramic acid (MurNAc) and N-acetylglucosamine (GlcNAc) residues in peptidoglycan, from either the reducing or the non-reducing ends of the peptidoglycan chains, with concomitant formation of a 1,6-anhydrobond in the MurNAc residue.. Functionally, murein-degrading enzyme that degrades murein glycan strands and insoluble, high-molecular weight murein sacculi, with the concomitant formation of a 1,6-anhydromuramoyl product. Lytic transglycosylases (LTs) play an integral role in the metabolism of the peptidoglycan (PG) sacculus. Their lytic action creates space within the PG sacculus to allow for its expansion as well as for the insertion of various structures such as secretion systems and flagella. In Vibrio cholerae serotype O1 (strain ATCC 39541 / Classical Ogawa 395 / O395), this protein is Membrane-bound lytic murein transglycosylase F.